We begin with the raw amino-acid sequence, 121 residues long: MSITKDQILEAVAAMSVMDVVELVSAMEEKFGVSAAAAVAVAAGPAEVAEEKTEFDVVLKGIGANKVAVIKAVRGATGLGLKEAKDLVESAPAVLKEGVSKDDAEALKKSLEEAGAEVEVK.

Belongs to the bacterial ribosomal protein bL12 family. In terms of assembly, homodimer. Part of the ribosomal stalk of the 50S ribosomal subunit. Forms a multimeric L10(L12)X complex, where L10 forms an elongated spine to which 2 to 4 L12 dimers bind in a sequential fashion. Binds GTP-bound translation factors.

In terms of biological role, forms part of the ribosomal stalk which helps the ribosome interact with GTP-bound translation factors. Is thus essential for accurate translation. The protein is Large ribosomal subunit protein bL12 of Pectobacterium carotovorum subsp. carotovorum (strain PC1).